We begin with the raw amino-acid sequence, 2271 residues long: Serine-rich adhesin for platelets (2271 aa).

An N-terminal signal peptide occupies residues 1–89 (MSKRQKAFHD…VNMLHDQQAF (89 aa)). A serine-rich repeat region 1, SRR1 region spans residues 90-230 (AASDAPLTSE…KTSTTSTSTA (141 aa)). Over residues 100–111 (LNTQSETVGNQN) the composition is skewed to polar residues. The disordered stretch occupies residues 100–229 (LNTQSETVGN…NKTSTTSTST (130 aa)). Residues 112 to 128 (STTIEASTSTADSTSVT) show a composition bias toward low complexity. Over residues 129 to 140 (KNSSSVQTSNSD) the composition is skewed to polar residues. The span at 150 to 229 (VTSTTNSTSN…NKTSTTSTST (80 aa)) shows a compositional bias: low complexity. Residues 231 to 751 (PVKLRTFSRL…TTFKYEVTRN (521 aa)) form a non-repeat region (NRR) region. The interval 245-491 (FASAATTTAV…QQVQFGTFEY (247 aa)) is L-lectin module. Ca(2+) is bound by residues Asp365, Tyr367, Asn369, and Asp382. The tract at residues 492–571 (TESAVTQVRY…NAGQSVTYYF (80 aa)) is beta-grasp module. The interval 572–659 (TDVKAPTVTV…KSTTTFTINV (88 aa)) is cadherin-like module-1. Asp573, Lys575, Asp601, Asn602, Asp645, Asp661, Thr663, Asp690, Asn691, and Asp734 together coordinate Ca(2+). The interval 660 to 751 (VDTTAPTVTP…TTFKYEVTRN (92 aa)) is cadherin-like module-2. Disordered regions lie at residues 751–791 (NSMS…VVST) and 806–2242 (SVSA…NGLL). 3 stretches are compositionally biased toward low complexity: residues 752–791 (SMSDSVSTSGSTQQSQSVSTSKADSQSASTSTSGSIVVST), 806–1392 (SVSA…LSLS), and 1402–2214 (SNSA…ATSE). The tract at residues 752 to 2232 (SMSDSVSTSG…AQSEKRLPDT (1481 aa)) is serine-rich repeat region 2, SRR2. An LPXTG sorting signal motif is present at residues 2229–2233 (LPDTG). A Pentaglycyl murein peptidoglycan amidated threonine modification is found at Thr2232. A propeptide spans 2233 to 2271 (GDSIKQNGLLGGVMTLLVGLGLMKRKKKKDENDQDDSQA) (removed by sortase).

It belongs to the serine-rich repeat protein (SRRP) family. Proteolytically cleaved by a metalloprotease. In terms of processing, glycosylated. It is probable that most of the Ser residues in SSR1 and SSR2 are O-GlcNAcylated. Sequential glycosylation by sugar transferases are able to generate complex sugar polymorphisms.

The protein resides in the secreted. The protein localises to the cell wall. Mediates binding to human platelets, possibly through a receptor-ligand interaction. Probably associated with virulence in endovascular infection. Plays a positive role in biofilm formation, possibly by self-association via the non-repeat region (NRR or binding region, BR). Binds to and plays a role in human lung epithelial cell invasion via the L-lectin module of its NRR domain; N-acetylneuraminic acid (Neu5Ac) inhibits binding. Treatment of host cells with neuraminidase decreases adherence of S.aureus cells, suggesting SraP recognizes a host terminal Neu5Ac moiety as a receptor. The chain is Serine-rich adhesin for platelets from Staphylococcus aureus (strain NCTC 8325 / PS 47).